The primary structure comprises 35 residues: Cupiennin-2b (35 aa).

Glutamine 35 carries the glutamine amide modification.

As to expression, expressed by the venom gland.

Its subcellular location is the secreted. The polypeptide is Cupiennin-2b (Cupiennius salei (American wandering spider)).